A 128-amino-acid polypeptide reads, in one-letter code: Small ribosomal subunit protein uS8c (128 aa).

Belongs to the universal ribosomal protein uS8 family. As to quaternary structure, part of the 30S ribosomal subunit.

The protein resides in the plastid. It localises to the chloroplast. In terms of biological role, one of the primary rRNA binding proteins, it binds directly to 16S rRNA central domain where it helps coordinate assembly of the platform of the 30S subunit. This chain is Small ribosomal subunit protein uS8c (rps8), found in Welwitschia mirabilis (Tree tumbo).